A 226-amino-acid polypeptide reads, in one-letter code: Urease accessory protein UreF (226 aa).

It belongs to the UreF family. In terms of assembly, ureD, UreF and UreG form a complex that acts as a GTP-hydrolysis-dependent molecular chaperone, activating the urease apoprotein by helping to assemble the nickel containing metallocenter of UreC. The UreE protein probably delivers the nickel.

Its subcellular location is the cytoplasm. Required for maturation of urease via the functional incorporation of the urease nickel metallocenter. The polypeptide is Urease accessory protein UreF (Paraburkholderia xenovorans (strain LB400)).